We begin with the raw amino-acid sequence, 667 residues long: Ribosomal oxygenase 1 (667 aa).

An N-acetylmethionine modification is found at Met-1. Residues 1-11 show a composition bias toward low complexity; that stretch reads MDGLRASAGLL. The segment at 1–99 is disordered; sequence MDGLRASAGL…ATGREPHGQL (99 aa). Composition is skewed to basic residues over residues 12–22 and 35–44; these read RRGRLRRRRQQ and RPRKIRRQLR. 3 positions are modified to phosphoserine: Ser-61, Ser-64, and Ser-108. The 146-residue stretch at 322–467 folds into the JmjC domain; it reads CSLRLLCPQA…DFLEAVLPLA (146 aa). Fe cation is bound by residues His-368, Asp-370, and His-433.

The protein belongs to the ROX family. NO66 subfamily. Interacts with SP7/OSX; the interaction is direct. Interacts with MYC. Interacts with PHF19; leading to its recruitment to H3K36me3 sites. It depends on Fe(2+) as a cofactor.

Its subcellular location is the nucleus. The protein localises to the nucleolus. It is found in the nucleoplasm. The enzyme catalyses N(6),N(6)-dimethyl-L-lysyl(36)-[histone H3] + 2 2-oxoglutarate + 2 O2 = L-lysyl(36)-[histone H3] + 2 formaldehyde + 2 succinate + 2 CO2. The catalysed reaction is N(6)-methyl-L-lysyl-[protein] + 2-oxoglutarate + O2 = L-lysyl-[protein] + formaldehyde + succinate + CO2. It carries out the reaction L-histidyl-[protein] + 2-oxoglutarate + O2 = (3S)-3-hydroxy-L-histidyl-[protein] + succinate + CO2. Oxygenase that can act as both a histone lysine demethylase and a ribosomal histidine hydroxylase. Specifically demethylates 'Lys-4' (H3K4me) and 'Lys-36' (H3K36me) of histone H3, thereby playing a central role in histone code. Preferentially demethylates trimethylated H3 'Lys-4' (H3K4me3) and monomethylated H3 'Lys-4' (H3K4me1) residues, while it has weaker activity for dimethylated H3 'Lys-36' (H3K36me2). Acts as a regulator of osteoblast differentiation via its interaction with SP7/OSX by demethylating H3K4me and H3K36me, thereby inhibiting SP7/OSX-mediated promoter activation. Also catalyzes demethylation of non-histone proteins, such as CGAS: demethylation of monomethylated CGAS promotes interaction between CGAS and PARP1, followed by PARP1 inactivation. Also catalyzes the hydroxylation of 60S ribosomal protein L8 on 'His-216', thereby playing a role in ribosome biogenesis. Participates in MYC-induced transcriptional activation. The sequence is that of Ribosomal oxygenase 1 (RIOX1) from Bos taurus (Bovine).